Consider the following 241-residue polypeptide: MHSATHPYAGLFIVLEGGEGAGKTTQMGAIATWLENSGWLAKLRSCHVDPPLLLTREPGGTPLGQGLRQLLLHSDLAIDPLAELLLYAADRAQHVAMGIRPQLQRGGIVLCDRYTASTVAYQGYGRGLDLQIIQHINQMATGGLGADLVLWLDLPVAVGLARTQQRGRGDRLEQNAVAFHERVRQGFLALAQQGSDRWQRIDADQPPDQVTQAIQECLAAHLHRWFETLKQRLTGGDRDLP.

17 to 24 (GGEGAGKT) serves as a coordination point for ATP.

Belongs to the thymidylate kinase family.

The enzyme catalyses dTMP + ATP = dTDP + ADP. Functionally, phosphorylation of dTMP to form dTDP in both de novo and salvage pathways of dTTP synthesis. This Thermosynechococcus vestitus (strain NIES-2133 / IAM M-273 / BP-1) protein is Thymidylate kinase.